A 463-amino-acid polypeptide reads, in one-letter code: A-type ATP synthase subunit B (463 aa).

The protein belongs to the ATPase alpha/beta chains family. Has multiple subunits with at least A(3), B(3), C, D, E, F, H, I and proteolipid K(x).

The protein resides in the cell membrane. Its function is as follows. Component of the A-type ATP synthase that produces ATP from ADP in the presence of a proton gradient across the membrane. The B chain is a regulatory subunit. The sequence is that of A-type ATP synthase subunit B from Desulfurococcus sp. (strain SY).